A 195-amino-acid polypeptide reads, in one-letter code: ATP-dependent Clp protease proteolytic subunit (195 aa).

Ser101 (nucleophile) is an active-site residue. His126 is an active-site residue.

The protein belongs to the peptidase S14 family. In terms of assembly, component of the chloroplastic Clp protease core complex.

The protein resides in the plastid. The protein localises to the chloroplast stroma. The catalysed reaction is Hydrolysis of proteins to small peptides in the presence of ATP and magnesium. alpha-casein is the usual test substrate. In the absence of ATP, only oligopeptides shorter than five residues are hydrolyzed (such as succinyl-Leu-Tyr-|-NHMec, and Leu-Tyr-Leu-|-Tyr-Trp, in which cleavage of the -Tyr-|-Leu- and -Tyr-|-Trp bonds also occurs).. Its function is as follows. Cleaves peptides in various proteins in a process that requires ATP hydrolysis. Has a chymotrypsin-like activity. Plays a major role in the degradation of misfolded proteins. In Oltmannsiellopsis viridis (Marine flagellate), this protein is ATP-dependent Clp protease proteolytic subunit.